The sequence spans 1003 residues: X-linked retinitis pigmentosa GTPase regulator (1003 aa).

RCC1 repeat units follow at residues 54 to 105 (NKLY…STEG), 106 to 158 (GKVY…LTED), 159 to 208 (GELF…VTTE), 209 to 261 (GQLY…LTEK), 262 to 313 (AVYT…ITDM), and 314 to 367 (GLMY…FATP). The residue at position 418 (serine 418) is a Phosphoserine. The interval 460–495 (TPEKEGLTQPEPDYFRDNMAKGKETDNSSATDSESL) is disordered. Residues 472-485 (DYFRDNMAKGKETD) show a composition bias toward basic and acidic residues. Polar residues predominate over residues 486-495 (NSSATDSESL). Serine 520 carries the post-translational modification Phosphoserine. Disordered regions lie at residues 625-657 (FKAI…LAEM), 691-760 (ESKD…TDQN), 794-932 (LSEI…DVKK), and 968-1003 (AFKG…CTIL). The span at 693-715 (KDFVKDSRRNKQDVIFDSERESI) shows a compositional bias: basic and acidic residues. Acidic residues-rich tracts occupy residues 716-726 (EEPDSYLEGES) and 797-821 (IPEE…EANE). Positions 827-848 (AGKEEKEIEILSDDLTDRAEDH) are enriched in basic and acidic residues. Residues 849 to 867 (EFSEDEEPEDMAEELDEDL) are compositionally biased toward acidic residues. Residues 882–896 (SLKKDETTKQEKRAI) are compositionally biased toward basic and acidic residues. Over residues 913–924 (SSSSEVLNDSES) the composition is skewed to low complexity. The segment covering 978 to 989 (QNHMGQNHQDTS) has biased composition (polar residues). Cysteine 1000 carries the post-translational modification Cysteine methyl ester. Cysteine 1000 is lipidated: S-geranylgeranyl cysteine. A propeptide spans 1001–1003 (TIL) (removed in mature form).

In terms of assembly, interacts with PDE6D. Interacts with RPGRIP1. Interacts with RPGRIP1L. PDE6D, RPGRIP1 and RPGRIP1L may compete for the same binding sites. Interacts with NPM1. Interacts with SMC1A and SMC3. Interacts with CEP290. Interacts with WHRN. Interacts with SPATA7. Interacts with RAB37 and RAB8A (in GDP-bound forms); functions as GEF for RAB37 and RAB8A. Post-translationally, prenylated. In terms of tissue distribution, isoform 1 is expressed exclusively in testis. Isoforms 2, 3 and 4 are widely expressed.

It is found in the golgi apparatus. Its subcellular location is the cell projection. The protein resides in the cilium. It localises to the cytoplasm. The protein localises to the cytoskeleton. It is found in the cilium basal body. Its subcellular location is the microtubule organizing center. The protein resides in the centrosome. It localises to the cilium axoneme. The protein localises to the flagellum axoneme. Acts as a guanine-nucleotide releasing factor (GEF) for RAB8A and RAB37 by promoting the conversion of inactive RAB-GDP to the active form RAB-GTP. GEF activity towards RAB8A may facilitate ciliary trafficking by modulating ciliary intracellular localization of RAB8A. GEF activity towards RAB37 maintains autophagic homeostasis and retinal function. Involved in photoreceptor integrity. May control cilia formation by regulating actin stress filaments and cell contractility. May be involved in microtubule organization and regulation of transport in primary cilia. May play a critical role in spermatogenesis and in intraflagellar transport processes. The chain is X-linked retinitis pigmentosa GTPase regulator (RPGR) from Canis lupus familiaris (Dog).